We begin with the raw amino-acid sequence, 343 residues long: tRNA N6-adenosine threonylcarbamoyltransferase (343 aa).

Fe cation contacts are provided by histidine 112 and histidine 116. Substrate-binding positions include 135 to 139, aspartate 168, glycine 181, and asparagine 273; that span reads LVSGG. Aspartate 301 contributes to the Fe cation binding site.

This sequence belongs to the KAE1 / TsaD family. Requires Fe(2+) as cofactor.

It is found in the cytoplasm. The enzyme catalyses L-threonylcarbamoyladenylate + adenosine(37) in tRNA = N(6)-L-threonylcarbamoyladenosine(37) in tRNA + AMP + H(+). In terms of biological role, required for the formation of a threonylcarbamoyl group on adenosine at position 37 (t(6)A37) in tRNAs that read codons beginning with adenine. Is involved in the transfer of the threonylcarbamoyl moiety of threonylcarbamoyl-AMP (TC-AMP) to the N6 group of A37, together with TsaE and TsaB. TsaD likely plays a direct catalytic role in this reaction. This chain is tRNA N6-adenosine threonylcarbamoyltransferase, found in Azoarcus sp. (strain BH72).